A 410-amino-acid chain; its full sequence is Gamma-glutamyl phosphate reductase (410 aa).

This sequence belongs to the gamma-glutamyl phosphate reductase family.

Its subcellular location is the cytoplasm. It catalyses the reaction L-glutamate 5-semialdehyde + phosphate + NADP(+) = L-glutamyl 5-phosphate + NADPH + H(+). The protein operates within amino-acid biosynthesis; L-proline biosynthesis; L-glutamate 5-semialdehyde from L-glutamate: step 2/2. In terms of biological role, catalyzes the NADPH-dependent reduction of L-glutamate 5-phosphate into L-glutamate 5-semialdehyde and phosphate. The product spontaneously undergoes cyclization to form 1-pyrroline-5-carboxylate. This chain is Gamma-glutamyl phosphate reductase, found in Sulfurimonas denitrificans (strain ATCC 33889 / DSM 1251) (Thiomicrospira denitrificans (strain ATCC 33889 / DSM 1251)).